Here is a 153-residue protein sequence, read N- to C-terminus: Histone H2B.4 (153 aa).

Basic and acidic residues-rich tracts occupy residues 1–10 and 20–54; these read MAPKKDEKPA and AKAE…GEKK. Positions 1–60 are disordered; that stretch reads MAPKKDEKPATAEAGAEAPAKAEAKPKAEKAAKKAKKEPSKKAAKEPKGDGEKKDKKKKK. K41 and K42 each carry N6-acetyllysine. A Glycyl lysine isopeptide (Lys-Gly) (interchain with G-Cter in ubiquitin) cross-link involves residue K149.

It belongs to the histone H2B family. The nucleosome is a histone octamer containing two molecules each of H2A, H2B, H3 and H4 assembled in one H3-H4 heterotetramer and two H2A-H2B heterodimers. The octamer wraps approximately 147 bp of DNA. The N-terminus is blocked. Post-translationally, can be acetylated to form H2BK33ac and H2BK34ac. Acetylated mainly on the ubiquitinated form. In terms of processing, monoubiquitinated to form H2BK143ub1; which is increased during the light period and may give a specific tag for epigenetic transcriptional activation.

The protein localises to the nucleus. It localises to the chromosome. Core component of nucleosome. Nucleosomes wrap and compact DNA into chromatin, limiting DNA accessibility to the cellular machineries which require DNA as a template. Histones thereby play a central role in transcription regulation, DNA repair, DNA replication and chromosomal stability. DNA accessibility is regulated via a complex set of post-translational modifications of histones, also called histone code, and nucleosome remodeling. This Chlamydomonas reinhardtii (Chlamydomonas smithii) protein is Histone H2B.4.